Consider the following 134-residue polypeptide: Crustacean hyperglycemic hormones isoform B (134 aa).

A signal peptide spans 1–24; sequence MFACRTLCLVVVMVASLGTSGVGG. Residue Q61 is modified to Pyrrolidone carboxylic acid. Position 63 is a D-phenylalanine; in form CHH-B-II (F63). Intrachain disulfides connect C67/C103, C83/C99, and C86/C112. Valine amide is present on V132.

This sequence belongs to the arthropod CHH/MIH/GIH/VIH hormone family. Stereoinversion of L-Phe (form CHH-B-I) to D-Phe (form CHH-B-II). In terms of tissue distribution, produced by the medulla terminalis X-organ in the eyestalks and transported to the sinus gland where they are stored and released. Present also in the ventral nervous system.

It is found in the secreted. Hormone found in the sinus gland of isopods and decapods which controls the blood sugar level. Has a secretagogue action over the amylase released from the midgut gland. May act as a stress hormone and may be involved in the control of molting and reproduction. This Homarus americanus (American lobster) protein is Crustacean hyperglycemic hormones isoform B.